Reading from the N-terminus, the 305-residue chain is DNA-directed RNA polymerase 35 kDa subunit (305 aa).

It belongs to the poxviridae DNA-directed RNA polymerase 35 kDa subunit family. As to quaternary structure, the DNA-dependent RNA polymerase used for intermediate and late genes expression consists of eight subunits 147 kDa, 133 kDa, 35 kDa, 30 kDa, 22 kDa, 19 kDa, 18 kDa and 7 kDa totalling more than 500 kDa in mass. The same holoenzyme, with the addition of the transcription-specificity factor RAP94, is used for early gene expression.

It is found in the virion. It carries out the reaction RNA(n) + a ribonucleoside 5'-triphosphate = RNA(n+1) + diphosphate. In terms of biological role, part of the DNA-dependent RNA polymerase which catalyzes the transcription of viral DNA into RNA using the four ribonucleoside triphosphates as substrates. Responsible for the transcription of early, intermediate and late genes. DNA-dependent RNA polymerase associates with the early transcription factor (ETF), itself composed of D6 and A7, thereby allowing the early genes transcription. Late transcription, and probably also intermediate transcription, require newly synthesized RNA polymerase. This Variola virus (isolate Human/India/Ind3/1967) (VARV) protein is DNA-directed RNA polymerase 35 kDa subunit (OPG156).